We begin with the raw amino-acid sequence, 510 residues long: Beta-glucosidase 26 (510 aa).

The N-terminal stretch at 1–27 (MRKFIAALRLALAAAAHLLLTLPPAQC) is a signal peptide. Gln59 contributes to the a beta-D-glucoside binding site. 2 N-linked (GlcNAc...) asparagine glycosylation sites follow: Asn87 and Asn127. A beta-D-glucoside-binding positions include His160 and 205–206 (NE). Catalysis depends on Glu206, which acts as the Proton donor. Cys225 and Cys228 are joined by a disulfide. Asn233 is a glycosylation site (N-linked (GlcNAc...) asparagine). A beta-D-glucoside-binding residues include Tyr345 and Glu416. Glu416 (nucleophile) is an active-site residue. N-linked (GlcNAc...) asparagine glycosylation is present at Asn424. Residues Trp463, 470–471 (EW), and Phe479 contribute to the a beta-D-glucoside site.

The protein belongs to the glycosyl hydrolase 1 family.

The catalysed reaction is Hydrolysis of terminal, non-reducing beta-D-glucosyl residues with release of beta-D-glucose.. Its function is as follows. Hydrolyzes p-nitrophenyl beta-D-glucoside, p-nitrophenyl beta-D-mannoside, p-nitrophenyl beta-D-galactoside, p-nitrophenyl beta-D-xyloside, p-nitrophenyl beta-D-fucoside, p-nitrophenyl beta-L-arabinoside, cello-oligosaccharides, laminari-oligosaccharides and sophorose. This Oryza sativa subsp. japonica (Rice) protein is Beta-glucosidase 26 (BGLU26).